The chain runs to 491 residues: UDP-N-acetylmuramate--L-alanine ligase (491 aa).

126–132 serves as a coordination point for ATP; that stretch reads GTHGKTT.

Belongs to the MurCDEF family.

It is found in the cytoplasm. The enzyme catalyses UDP-N-acetyl-alpha-D-muramate + L-alanine + ATP = UDP-N-acetyl-alpha-D-muramoyl-L-alanine + ADP + phosphate + H(+). It participates in cell wall biogenesis; peptidoglycan biosynthesis. Cell wall formation. The protein is UDP-N-acetylmuramate--L-alanine ligase of Shigella flexneri.